A 182-amino-acid polypeptide reads, in one-letter code: ATP-dependent protease subunit HslV (182 aa).

Thr-12 is an active-site residue. The Na(+) site is built by Ala-167, Cys-170, and Thr-173.

Belongs to the peptidase T1B family. HslV subfamily. A double ring-shaped homohexamer of HslV is capped on each side by a ring-shaped HslU homohexamer. The assembly of the HslU/HslV complex is dependent on binding of ATP.

It localises to the cytoplasm. The enzyme catalyses ATP-dependent cleavage of peptide bonds with broad specificity.. Its activity is regulated as follows. Allosterically activated by HslU binding. Protease subunit of a proteasome-like degradation complex believed to be a general protein degrading machinery. The sequence is that of ATP-dependent protease subunit HslV from Chlorobium luteolum (strain DSM 273 / BCRC 81028 / 2530) (Pelodictyon luteolum).